We begin with the raw amino-acid sequence, 151 residues long: UPF0178 protein amb2838 (151 aa).

The protein belongs to the UPF0178 family.

This chain is UPF0178 protein amb2838, found in Paramagnetospirillum magneticum (strain ATCC 700264 / AMB-1) (Magnetospirillum magneticum).